Here is a 195-residue protein sequence, read N- to C-terminus: Probable GTP-binding protein EngB (195 aa).

The EngB-type G domain maps to 22 to 195 (GLPEIALAGR…WNAILAKINK (174 aa)). Residues 30-37 (GRSNVGKS), 57-61 (GKTQT), 75-78 (DVPG), 142-145 (TKAD), and 174-176 (FSS) each bind GTP. Positions 37 and 59 each coordinate Mg(2+).

This sequence belongs to the TRAFAC class TrmE-Era-EngA-EngB-Septin-like GTPase superfamily. EngB GTPase family. Mg(2+) serves as cofactor.

Functionally, necessary for normal cell division and for the maintenance of normal septation. The sequence is that of Probable GTP-binding protein EngB from Bacillus pumilus (strain SAFR-032).